A 670-amino-acid chain; its full sequence is Kinesin-like protein KIF2B (670 aa).

T122 carries the phosphothreonine; by PLK1 modification. Positions 146–173 form a coiled coil; it reads CLQEIEKVQKQREKRRRLQQEIRARRAL. Phosphoserine; by PLK1 is present on S201. In terms of domain architecture, Kinesin motor spans 210–540; it reads RICVCVRKRP…LRYANRVKEL (331 aa). 300-307 is a binding site for ATP; it reads GQTGSGKT.

Belongs to the TRAFAC class myosin-kinesin ATPase superfamily. Kinesin family. MCAK/KIF2 subfamily. Post-translationally, phosphorylation at Thr-122 by PLK1 is required for activity in the correction of kinetochore-microtubules attachment errors, while phosphorylation at Ser-201 also by PLK1 is required for the kinetochore localization and activity in prometaphase.

Its subcellular location is the cytoplasm. It localises to the cytoskeleton. It is found in the microtubule organizing center. The protein localises to the centrosome. The protein resides in the spindle. Its subcellular location is the chromosome. It localises to the centromere. It is found in the kinetochore. Its function is as follows. Plus end-directed microtubule-dependent motor required for spindle assembly and chromosome movement during mitosis. Has microtubule depolymerization activity. Plays a role in chromosome congression. The sequence is that of Kinesin-like protein KIF2B (KIF2B) from Macaca fascicularis (Crab-eating macaque).